Consider the following 137-residue polypeptide: Profilin-3 (137 aa).

The protein belongs to the profilin family. As to quaternary structure, interacts with ACTRT3. In terms of tissue distribution, detected in round spermatids.

The protein resides in the cytoplasm. It localises to the cytoskeleton. The protein localises to the nucleus. Functionally, binds to actin and affects the structure of the cytoskeleton. Slightly reduces actin polymerization. Binds to poly-L-proline, phosphatidylinositol 3-phosphate (PtdIns(3)P), phosphatidylinositol 4,5-bisphosphate (PtdIns(4,5)P2), and phosphatidylinositol 4-phosphate (PtdIns(4)P). May be involved in spermatogenesis. The chain is Profilin-3 (Pfn3) from Rattus norvegicus (Rat).